Reading from the N-terminus, the 62-residue chain is Potassium channel toxin alpha-KTx 6.21 (62 aa).

The N-terminal stretch at 1–24 is a signal peptide; the sequence is MNAKLIYLLLVVTTMMLTFDTTQA. 4 disulfide bridges follow: C29–C50, C35–C55, C39–C57, and C45–C60. V61 carries the post-translational modification Valine amide.

Belongs to the short scorpion toxin superfamily. Potassium channel inhibitor family. Alpha-KTx 06 subfamily. In terms of processing, C-terminal amidation is important for activity. There is a 50-70-fold decrease in ability to inhibit Kv1.2/KCNA2 when the toxin is not amidated. This decrease may be explained by a 23-fold slower association rate (k(on)) together with a 2-fold faster dissociation rate (k(off)). Expressed by the venom gland.

The protein resides in the secreted. Its function is as follows. Reversible blocker of voltage-gated potassium channels with fast binding and unbinding kinetics. Has highest activity on human voltage-gated potassium channel Kv1.2/KCNA2 channels (IC(50)=0.11-0.16 nM), whereas its affinity for other channels tested was in the nanomolar range (hKv1.1/KCNA1, IC(50)=253 nM; hKv1.3/KCNA3, IC(50)=91 nM; and hKCa3.1/KCNN4, IC(50)=70 nM). In Urodacus yaschenkoi (Inland robust scorpion), this protein is Potassium channel toxin alpha-KTx 6.21.